Reading from the N-terminus, the 607-residue chain is Phosphomethylpyrimidine synthase (607 aa).

Substrate-binding positions include Asn216, Met245, Tyr274, His310, 330 to 332, 371 to 374, and Glu410; these read SRG and DGLR. Residue His414 coordinates Zn(2+). Tyr437 provides a ligand contact to substrate. His478 lines the Zn(2+) pocket. [4Fe-4S] cluster is bound by residues Cys558, Cys561, and Cys566.

It belongs to the ThiC family. As to quaternary structure, homodimer. The cofactor is [4Fe-4S] cluster.

The enzyme catalyses 5-amino-1-(5-phospho-beta-D-ribosyl)imidazole + S-adenosyl-L-methionine = 4-amino-2-methyl-5-(phosphooxymethyl)pyrimidine + CO + 5'-deoxyadenosine + formate + L-methionine + 3 H(+). The protein operates within cofactor biosynthesis; thiamine diphosphate biosynthesis. Catalyzes the synthesis of the hydroxymethylpyrimidine phosphate (HMP-P) moiety of thiamine from aminoimidazole ribotide (AIR) in a radical S-adenosyl-L-methionine (SAM)-dependent reaction. This is Phosphomethylpyrimidine synthase from Agrobacterium fabrum (strain C58 / ATCC 33970) (Agrobacterium tumefaciens (strain C58)).